The chain runs to 232 residues: 7-cyano-7-deazaguanine synthase 1 (232 aa).

ATP is bound at residue 7–17 (CSGGLDSVSLA). Residues Cys-185, Cys-193, Cys-196, and Cys-199 each coordinate Zn(2+).

It belongs to the QueC family. Zn(2+) is required as a cofactor.

It carries out the reaction 7-carboxy-7-deazaguanine + NH4(+) + ATP = 7-cyano-7-deazaguanine + ADP + phosphate + H2O + H(+). It functions in the pathway purine metabolism; 7-cyano-7-deazaguanine biosynthesis. In terms of biological role, catalyzes the ATP-dependent conversion of 7-carboxy-7-deazaguanine (CDG) to 7-cyano-7-deazaguanine (preQ(0)). This is 7-cyano-7-deazaguanine synthase 1 from Mesorhizobium japonicum (strain LMG 29417 / CECT 9101 / MAFF 303099) (Mesorhizobium loti (strain MAFF 303099)).